Here is a 509-residue protein sequence, read N- to C-terminus: Probable glycine dehydrogenase (decarboxylating) subunit 2 (509 aa).

Position 278 is an N6-(pyridoxal phosphate)lysine (Lys278).

The protein belongs to the GcvP family. C-terminal subunit subfamily. As to quaternary structure, the glycine cleavage system is composed of four proteins: P, T, L and H. In this organism, the P 'protein' is a heterodimer of two subunits. Pyridoxal 5'-phosphate is required as a cofactor.

It catalyses the reaction N(6)-[(R)-lipoyl]-L-lysyl-[glycine-cleavage complex H protein] + glycine + H(+) = N(6)-[(R)-S(8)-aminomethyldihydrolipoyl]-L-lysyl-[glycine-cleavage complex H protein] + CO2. Its function is as follows. The glycine cleavage system catalyzes the degradation of glycine. The P protein binds the alpha-amino group of glycine through its pyridoxal phosphate cofactor; CO(2) is released and the remaining methylamine moiety is then transferred to the lipoamide cofactor of the H protein. The chain is Probable glycine dehydrogenase (decarboxylating) subunit 2 from Saccharolobus islandicus (strain Y.N.15.51 / Yellowstone #2) (Sulfolobus islandicus).